The following is a 56-amino-acid chain: UPF0339 protein NMA1193/NMA1859 (56 aa).

The protein belongs to the UPF0339 family.

In Neisseria meningitidis serogroup A / serotype 4A (strain DSM 15465 / Z2491), this protein is UPF0339 protein NMA1193/NMA1859.